The following is a 653-amino-acid chain: Structural protein ORF653 (653 aa).

The stretch at A300–L330 forms a coiled coil. A compositionally biased stretch (basic and acidic residues) spans E302 to S326. Disordered regions lie at residues E302–Q329, G344–P388, and A626–S653. Over residues E371–R381 the composition is skewed to low complexity. The stretch at K505 to T649 forms a coiled coil. The segment covering E630 to N647 has biased composition (acidic residues).

The protein resides in the virion. In Acidianus two-tailed virus (ATV), this protein is Structural protein ORF653.